A 603-amino-acid polypeptide reads, in one-letter code: Elongation factor 4 (603 aa).

One can recognise a tr-type G domain in the interval 6–188 (KYVRNFSIIA…DIVKNVPAPI (183 aa)). GTP contacts are provided by residues 18–23 (DHGKST) and 135–138 (NKID).

Belongs to the TRAFAC class translation factor GTPase superfamily. Classic translation factor GTPase family. LepA subfamily.

It localises to the cell membrane. It catalyses the reaction GTP + H2O = GDP + phosphate + H(+). Functionally, required for accurate and efficient protein synthesis under certain stress conditions. May act as a fidelity factor of the translation reaction, by catalyzing a one-codon backward translocation of tRNAs on improperly translocated ribosomes. Back-translocation proceeds from a post-translocation (POST) complex to a pre-translocation (PRE) complex, thus giving elongation factor G a second chance to translocate the tRNAs correctly. Binds to ribosomes in a GTP-dependent manner. The chain is Elongation factor 4 from Finegoldia magna (strain ATCC 29328 / DSM 20472 / WAL 2508) (Peptostreptococcus magnus).